The sequence spans 138 residues: 1,4-dihydroxy-2-naphthoyl-CoA hydrolase (138 aa).

Asp15 is a catalytic residue.

This sequence belongs to the 4-hydroxybenzoyl-CoA thioesterase family. DHNA-CoA hydrolase subfamily.

It carries out the reaction 1,4-dihydroxy-2-naphthoyl-CoA + H2O = 1,4-dihydroxy-2-naphthoate + CoA + H(+). The protein operates within cofactor biosynthesis; phylloquinone biosynthesis. It participates in quinol/quinone metabolism; 1,4-dihydroxy-2-naphthoate biosynthesis; 1,4-dihydroxy-2-naphthoate from chorismate: step 7/7. Functionally, catalyzes the hydrolysis of 1,4-dihydroxy-2-naphthoyl-CoA (DHNA-CoA) to 1,4-dihydroxy-2-naphthoate (DHNA), a reaction involved in phylloquinone (vitamin K1) biosynthesis. The polypeptide is 1,4-dihydroxy-2-naphthoyl-CoA hydrolase (Trichodesmium erythraeum (strain IMS101)).